We begin with the raw amino-acid sequence, 166 residues long: ATP synthase subunit b (166 aa).

The helical transmembrane segment at 10–30 (LLFWMIVSFGIVFVILSKYGF) threads the bilayer.

The protein belongs to the ATPase B chain family. F-type ATPases have 2 components, F(1) - the catalytic core - and F(0) - the membrane proton channel. F(1) has five subunits: alpha(3), beta(3), gamma(1), delta(1), epsilon(1). F(0) has three main subunits: a(1), b(2) and c(10-14). The alpha and beta chains form an alternating ring which encloses part of the gamma chain. F(1) is attached to F(0) by a central stalk formed by the gamma and epsilon chains, while a peripheral stalk is formed by the delta and b chains.

The protein resides in the cell inner membrane. Its function is as follows. F(1)F(0) ATP synthase produces ATP from ADP in the presence of a proton or sodium gradient. F-type ATPases consist of two structural domains, F(1) containing the extramembraneous catalytic core and F(0) containing the membrane proton channel, linked together by a central stalk and a peripheral stalk. During catalysis, ATP synthesis in the catalytic domain of F(1) is coupled via a rotary mechanism of the central stalk subunits to proton translocation. Component of the F(0) channel, it forms part of the peripheral stalk, linking F(1) to F(0). This is ATP synthase subunit b from Parabacteroides distasonis (strain ATCC 8503 / DSM 20701 / CIP 104284 / JCM 5825 / NCTC 11152).